A 152-amino-acid polypeptide reads, in one-letter code: Interleukin-1 family member 10 (152 aa).

It belongs to the IL-1 family. In terms of assembly, interacts with cargo receptor TMED10; the interaction mediates the translocation from the cytoplasm into the ERGIC (endoplasmic reticulum-Golgi intermediate compartment) and thereby secretion.

It is found in the cytoplasm. Its subcellular location is the endoplasmic reticulum-Golgi intermediate compartment. The protein localises to the secreted. In terms of biological role, cytokine with immunomodulatory activity. Alone, does not induce cytokine production, but reduces IL22 and IL17A production by T-cells in response to heat-killed Candida albicans. Reduces IL36G-induced production of IL8 by peripheral blood mononuclear cells. Increases IL6 production by dendritic cells stimulated by bacterial lipopolysaccharides (LPS). Ligand for IL-36R/IL1RL2. In Mus musculus (Mouse), this protein is Interleukin-1 family member 10 (Il1f10).